We begin with the raw amino-acid sequence, 44 residues long: Photosystem I reaction center subunit IX (44 aa).

Residues 7-27 traverse the membrane as a helical segment; the sequence is YLSVAPVASTLWFVALAGLLI.

The protein belongs to the PsaJ family.

The protein localises to the plastid. It localises to the chloroplast thylakoid membrane. Functionally, may help in the organization of the PsaE and PsaF subunits. This is Photosystem I reaction center subunit IX from Cicer arietinum (Chickpea).